A 155-amino-acid chain; its full sequence is Basic phospholipase A2 PC1 (155 aa).

Residues 1–21 (MYPAHLLVLLAVCVSLLGASA) form the signal peptide. A propeptide spanning residues 22–27 (ISNRPR) is cleaved from the precursor. Intrachain disulfides connect Cys-38–Cys-98, Cys-54–Cys-144, Cys-56–Cys-72, Cys-71–Cys-125, Cys-78–Cys-118, Cys-87–Cys-111, and Cys-105–Cys-116. Ca(2+)-binding residues include Tyr-55, Gly-57, and Gly-59. The active site involves His-75. Residue Asp-76 coordinates Ca(2+). The active site involves Asp-119.

The protein belongs to the phospholipase A2 family. Group I subfamily. D49 sub-subfamily. It depends on Ca(2+) as a cofactor. Expressed by the venom gland.

The protein resides in the secreted. It catalyses the reaction a 1,2-diacyl-sn-glycero-3-phosphocholine + H2O = a 1-acyl-sn-glycero-3-phosphocholine + a fatty acid + H(+). Its function is as follows. Snake venom phospholipase A2 (PLA2) that inhibits neuromuscular transmission by blocking acetylcholine release from the nerve termini. PLA2 catalyzes the calcium-dependent hydrolysis of the 2-acyl groups in 3-sn-phosphoglycerides. In Laticauda colubrina (Yellow-lipped sea krait), this protein is Basic phospholipase A2 PC1.